The following is a 249-amino-acid chain: Type III pantothenate kinase (249 aa).

6 to 13 contributes to the ATP binding site; sequence DCGNSFIK. Substrate-binding positions include tyrosine 93 and 100–103; that span reads GLDR. Catalysis depends on aspartate 102, which acts as the Proton acceptor. Aspartate 122 is a binding site for K(+). ATP is bound at residue threonine 125. Residue threonine 181 participates in substrate binding.

The protein belongs to the type III pantothenate kinase family. As to quaternary structure, homodimer. Requires NH4(+) as cofactor. K(+) is required as a cofactor.

It localises to the cytoplasm. The catalysed reaction is (R)-pantothenate + ATP = (R)-4'-phosphopantothenate + ADP + H(+). Its pathway is cofactor biosynthesis; coenzyme A biosynthesis; CoA from (R)-pantothenate: step 1/5. Functionally, catalyzes the phosphorylation of pantothenate (Pan), the first step in CoA biosynthesis. The protein is Type III pantothenate kinase of Pseudomonas fluorescens (strain SBW25).